Reading from the N-terminus, the 388-residue chain is MIKIGVIADDFTGATDIASFLVENGLPTVQINGVPTGKMPEAIDALVISLKTRSCPVVEATQQSLAALSWLQQQGCKQIYFKYCSTFDSTAKGNIGPVTDALMDALDTPFTVFSPALPVNGRTVYQGYLFVMNQLLAESGMRHHPVNPMTDSYLPRLVEAQSTGRCGVVSAHVFEQGVDAVRQELARLQQEGYRYAVLDALTEHHLEIQGEALRDAPLVTGGSGLAIGLARQWAQENGNQARKAGRPLAGRGVVLSGSCSQMTNRQVAHYRQIAPAREVDVARCLSIETLAAYAHELAEWVLGQESVLAPLVFATASTDALAAIQQQYGAQKASQAVETLFSQLAARLAAEGVTRFIVAGGETSGVVTQSLGIKGFHIGPTISPACRG.

Residues S258 and 360–363 each bind ATP; that span reads GGET.

It belongs to the four-carbon acid sugar kinase family.

The enzyme catalyses 3-dehydro-L-erythronate + ATP = 3-dehydro-4-O-phospho-L-erythronate + ADP + H(+). It catalyses the reaction 3-dehydro-D-erythronate + ATP = 3-dehydro-4-O-phospho-D-erythronate + ADP + H(+). In terms of biological role, catalyzes the ATP-dependent phosphorylation of 3-oxo-tetronate to 3-oxo-tetronate 4-phosphate. This chain is 3-oxo-tetronate kinase, found in Escherichia coli (strain K12).